The primary structure comprises 507 residues: Cobyric acid synthase (507 aa).

Residues 259 to 456 (EIQIAVIKLP…LHGIFDNGTW (198 aa)) form the GATase cobBQ-type domain. Cysteine 340 serves as the catalytic Nucleophile. Histidine 448 is a catalytic residue.

Belongs to the CobB/CobQ family. CobQ subfamily.

It functions in the pathway cofactor biosynthesis; adenosylcobalamin biosynthesis. Functionally, catalyzes amidations at positions B, D, E, and G on adenosylcobyrinic A,C-diamide. NH(2) groups are provided by glutamine, and one molecule of ATP is hydrogenolyzed for each amidation. The sequence is that of Cobyric acid synthase from Prochlorococcus marinus (strain SARG / CCMP1375 / SS120).